The chain runs to 391 residues: 3-ketoacyl-CoA thiolase (391 aa).

Cysteine 95 (acyl-thioester intermediate) is an active-site residue. Catalysis depends on proton acceptor residues histidine 347 and cysteine 377.

Belongs to the thiolase-like superfamily. Thiolase family. In terms of assembly, heterotetramer of two alpha chains (FadB) and two beta chains (FadA).

It localises to the cytoplasm. It catalyses the reaction an acyl-CoA + acetyl-CoA = a 3-oxoacyl-CoA + CoA. Its pathway is lipid metabolism; fatty acid beta-oxidation. In terms of biological role, catalyzes the final step of fatty acid oxidation in which acetyl-CoA is released and the CoA ester of a fatty acid two carbons shorter is formed. The protein is 3-ketoacyl-CoA thiolase of Pseudomonas aeruginosa (strain UCBPP-PA14).